The following is a 246-amino-acid chain: UDP-N-acetyl-D-mannosaminuronic acid transferase (246 aa).

Belongs to the glycosyltransferase 26 family.

It catalyses the reaction UDP-N-acetyl-alpha-D-mannosaminouronate + N-acetyl-alpha-D-glucosaminyl-di-trans,octa-cis-undecaprenyl diphosphate = beta-D-ManNAcA-(1-&gt;4)-alpha-D-GlcNAc-di-trans,octa-cis-undecaprenyl diphosphate + UDP + H(+). The protein operates within bacterial outer membrane biogenesis; enterobacterial common antigen biosynthesis. In terms of biological role, catalyzes the synthesis of Und-PP-GlcNAc-ManNAcA (Lipid II), the second lipid-linked intermediate involved in enterobacterial common antigen (ECA) synthesis. This is UDP-N-acetyl-D-mannosaminuronic acid transferase from Escherichia fergusonii (strain ATCC 35469 / DSM 13698 / CCUG 18766 / IAM 14443 / JCM 21226 / LMG 7866 / NBRC 102419 / NCTC 12128 / CDC 0568-73).